A 164-amino-acid polypeptide reads, in one-letter code: Dynein regulatory complex protein 8 (164 aa).

EF-hand domains are found at residues 16–51 (ELHK…LGCC) and 94–129 (AAED…EGEP).

This sequence belongs to the DRC8 family. As to quaternary structure, component of the nexin-dynein regulatory complex (N-DRC).

It localises to the cytoplasm. The protein resides in the cytoskeleton. Its subcellular location is the flagellum axoneme. Functionally, component of the nexin-dynein regulatory complex (N-DRC), a key regulator of ciliary/flagellar motility which maintains the alignment and integrity of the distal axoneme and regulates microtubule sliding in motile axonemes. The protein is Dynein regulatory complex protein 8 (Efcab2) of Mus musculus (Mouse).